A 155-amino-acid chain; its full sequence is Small ribosomal subunit protein uS17 (155 aa).

A2 bears the N-acetylalanine mark.

The protein belongs to the universal ribosomal protein uS17 family.

The protein is Small ribosomal subunit protein uS17 of Drosophila yakuba (Fruit fly).